The primary structure comprises 245 residues: Aliphatic sulfonates import ATP-binding protein SsuB 1 (245 aa).

The ABC transporter domain maps to 8-223 (VSITGLRKSF…ERADPDILRY (216 aa)). 40–47 (GPSGTGKT) contributes to the ATP binding site.

Belongs to the ABC transporter superfamily. Aliphatic sulfonates importer (TC 3.A.1.17.2) family. In terms of assembly, the complex is composed of two ATP-binding proteins (SsuB), two transmembrane proteins (SsuC) and a solute-binding protein (SsuA).

The protein resides in the cell membrane. The enzyme catalyses ATP + H2O + aliphatic sulfonate-[sulfonate-binding protein]Side 1 = ADP + phosphate + aliphatic sulfonateSide 2 + [sulfonate-binding protein]Side 1.. Part of the ABC transporter complex SsuABC involved in aliphatic sulfonates import. Responsible for energy coupling to the transport system. The polypeptide is Aliphatic sulfonates import ATP-binding protein SsuB 1 (Nocardia farcinica (strain IFM 10152)).